A 333-amino-acid chain; its full sequence is Pro-cathepsin H (333 aa).

The signal sequence occupies residues 1–20 (MWAALPLLCAGAWLLSTGAT). A propeptide spans 21 to 95 (AELTVNAIEK…AEIKHKFLWS (75 aa)) (activation peptide). N-linked (GlcNAc...) asparagine glycosylation is found at Asn-70 and Asn-99. Disulfide bonds link Cys-100–Cys-325, Cys-136–Cys-179, Cys-170–Cys-212, and Cys-270–Cys-320. Residues 104 to 113 (KSNYLRGTGP) constitute a propeptide that is removed on maturation. The active site involves Cys-139. Asn-228 carries an N-linked (GlcNAc...) asparagine glycan. Catalysis depends on residues His-279 and Asn-299.

This sequence belongs to the peptidase C1 family. As to quaternary structure, composed of a mini chain and a large chain. The large chain may be split into heavy and light chain. All chains are held together by disulfide bonds. In terms of tissue distribution, widely expressed with highest expression found in non-skeletal tissues. Low levels found in skeletal tissue.

It localises to the lysosome. The catalysed reaction is Hydrolysis of proteins, acting as an aminopeptidase (notably, cleaving Arg-|-Xaa bonds) as well as an endopeptidase.. Functionally, important for the overall degradation of proteins in lysosomes. This chain is Pro-cathepsin H (Ctsh), found in Mus musculus (Mouse).